Reading from the N-terminus, the 884-residue chain is Putative GTP diphosphokinase RSH1, chloroplastic (884 aa).

A chloroplast-targeting transit peptide spans 1–55; the sequence is MTSASSMSVSVECVNICNLTKGDGNARSDCSALSCAWKAPRALTGFLASTAHPPV. The HD domain occupies 172–279; the sequence is FIIHPVAVAR…VKLADRLHNM (108 aa). Residues 563-626 form the TGS domain; the sequence is LGSRVFVFTP…ENAEVVEIVT (64 aa). Positions 711 to 727 are enriched in polar residues; it reads QSQDKSRDTTPAPQNGS. The segment at 711-747 is disordered; it reads QSQDKSRDTTPAPQNGSVWAPKVNGKHNKAIKNSSSD. Residues 797–868 enclose the ACT domain; it reads WLCVVSMDRK…LVLGVLGWSS (72 aa).

The protein belongs to the RelA/SpoT family. In terms of assembly, interacts with RPP4. Interacts with RPP5. In terms of tissue distribution, expressed in hypocotyls, shoots, cotyledons, rosette leaves, sepals and pistils.

The protein localises to the plastid. Its subcellular location is the chloroplast. The enzyme catalyses GTP + ATP = guanosine 3'-diphosphate 5'-triphosphate + AMP. Its function is as follows. May be involved in a rapid plant ppGpp (guanosine 3'-diphosphate 5'-diphosphate)-mediated response to pathogens and other stresses. Unable to functionally complement E.coli relA mutants. The polypeptide is Putative GTP diphosphokinase RSH1, chloroplastic (RSH1) (Arabidopsis thaliana (Mouse-ear cress)).